We begin with the raw amino-acid sequence, 350 residues long: Melatonin receptor type 1A (350 aa).

Residues 1 to 29 (MQGNGSALPNASQPVLRGDGARPSWLASA) are Extracellular-facing. Residues Asn-4 and Asn-10 are each glycosylated (N-linked (GlcNAc...) asparagine). The helical transmembrane segment at 30-50 (LACVLIFTIVVDILGNLLVIL) threads the bilayer. The Cytoplasmic segment spans residues 51–63 (SVYRNKKLRNAGN). The chain crosses the membrane as a helical span at residues 64 to 84 (IFVVSLAVADLVVAIYPYPLV). Residues 85-102 (LMSIFNNGWNLGYLHCQV) are Extracellular-facing. Cysteines 100 and 177 form a disulfide. The helical transmembrane segment at 103–123 (SGFLMGLSVIGSIFNITGIAI) threads the bilayer. Residues 124 to 142 (NRYCYICHSLKYDKLYSSK) are Cytoplasmic-facing. A helical membrane pass occupies residues 143 to 163 (NSLCYVLLIWLLTLAAVLPNL). 2 residues coordinate melatonin: Asn-162 and Gln-181. Topologically, residues 164-187 (RAGTLQYDPRIYSCTFAQSVSSAY) are extracellular. Residues 188-208 (TIAVVVFHFLVPMIIVIFCYL) form a helical membrane-spanning segment. Over 209–240 (RIWILVLQVRQRVKPDRKPKLKPQDFRNFVTM) the chain is Cytoplasmic. Residues 241–261 (FVVFVLFAICWAPLNFIGLAV) traverse the membrane as a helical segment. Topologically, residues 262–274 (ASDPASMVPRIPE) are extracellular. A helical membrane pass occupies residues 275–295 (WLFVASYYMAYFNSCLNAIIY). Over 296-350 (GLLNQNFRKEYRRIIVSLCTARVFFVDSSNDVADRVKWKPSPLMTNNNVVKVDSV) the chain is Cytoplasmic.

The protein belongs to the G-protein coupled receptor 1 family. In terms of tissue distribution, expressed in hypophyseal pars tuberalis and hypothalamic suprachiasmatic nuclei (SCN). Hippocampus.

It is found in the cell membrane. In terms of biological role, high affinity receptor for melatonin. Likely to mediate the reproductive and circadian actions of melatonin. The activity of this receptor is mediated by pertussis toxin sensitive G proteins that inhibit adenylate cyclase activity. Possibly involved in sleep induction, by melatonin activation of the potassium channel KCNMA1/BK and the dissociation of G-beta and G-gamma subunits, thereby decreasing synaptic transmission. In Homo sapiens (Human), this protein is Melatonin receptor type 1A (MTNR1A).